The chain runs to 132 residues: Small integral membrane protein 33 (132 aa).

Residues 1–28 (MHQAGHYSWPSPAVNSSSEQEPQRQLPE) form a disordered region. The N-linked (GlcNAc...) asparagine glycan is linked to N15. A helical transmembrane segment spans residues 43-63 (PVVTVIVAVFVLLAVCIIVAV). The disordered stretch occupies residues 99–132 (PQDSPEEAPPGPLVPGSCPAPDGPRPSIDEVTCL).

It is found in the membrane. This Homo sapiens (Human) protein is Small integral membrane protein 33.